The sequence spans 175 residues: Calcineurin subunit B (175 aa).

EF-hand domains lie at 21–56 (DEIERLRKRFMKLDRDSSGSIDKNEFMSIPGVSANP), 60–88 (RIMEVFDADNSGDVDFQEFITGLSIFSGR), 90–125 (SKDEKLKFAFKIYDIDKDGLISNGELFIVLKIMVGS), and 131–166 (QLQQIVDRTIMENDLDGDGQLSFEEFKSAIETTEVA). The Ca(2+) site is built by aspartate 34, aspartate 36, serine 38, serine 40, glutamate 45, aspartate 66, aspartate 68, serine 70, aspartate 72, glutamate 77, aspartate 103, aspartate 105, aspartate 107, glutamate 114, aspartate 144, aspartate 146, aspartate 148, glutamine 150, and glutamate 155.

Belongs to the calcineurin regulatory subunit family. Composed of a catalytic subunit (A) and a regulatory subunit (B).

Its function is as follows. Regulatory subunit of calcineurin, a calcium-dependent, calmodulin stimulated protein phosphatase. Confers calcium sensitivity. The sequence is that of Calcineurin subunit B (CNB1) from Candida glabrata (strain ATCC 2001 / BCRC 20586 / JCM 3761 / NBRC 0622 / NRRL Y-65 / CBS 138) (Yeast).